A 264-amino-acid polypeptide reads, in one-letter code: Protein FAM228B (264 aa).

The protein belongs to the FAM228 family.

The sequence is that of Protein FAM228B (FAM228B) from Bos taurus (Bovine).